Here is a 363-residue protein sequence, read N- to C-terminus: Peptide chain release factor 1 (363 aa).

Gln237 carries the post-translational modification N5-methylglutamine.

The protein belongs to the prokaryotic/mitochondrial release factor family. Methylated by PrmC. Methylation increases the termination efficiency of RF1.

The protein localises to the cytoplasm. Peptide chain release factor 1 directs the termination of translation in response to the peptide chain termination codons UAG and UAA. The sequence is that of Peptide chain release factor 1 from Hydrogenovibrio crunogenus (strain DSM 25203 / XCL-2) (Thiomicrospira crunogena).